Reading from the N-terminus, the 218-residue chain is MTQDEMKKAAGWAALQYVEKDSIVGVGTGSTVNHFIDALATMKADIDGAVSSSEASTEKMKSLGIPVYDLNSVDDLSVYVDGADEINGHMDMIKGGGAALTREKIVAAVADKFICIVDNTKQVDILGEFPLPVEVIPMARSYVARQLVKLGGDPVYREGVVTDNGNIILDVYNMKIMTPKELEEQINAIVGVVTNGLFAMRGADVLLVGTPEGVKTVK.

Residues 28-31, 81-84, and 94-97 each bind substrate; these read TGST, DGAD, and KGGG. Residue glutamate 103 is the Proton acceptor of the active site. Lysine 121 is a substrate binding site.

This sequence belongs to the ribose 5-phosphate isomerase family. Homodimer.

It catalyses the reaction aldehydo-D-ribose 5-phosphate = D-ribulose 5-phosphate. Its pathway is carbohydrate degradation; pentose phosphate pathway; D-ribose 5-phosphate from D-ribulose 5-phosphate (non-oxidative stage): step 1/1. Functionally, catalyzes the reversible conversion of ribose-5-phosphate to ribulose 5-phosphate. The sequence is that of Ribose-5-phosphate isomerase A from Shewanella piezotolerans (strain WP3 / JCM 13877).